Here is a 200-residue protein sequence, read N- to C-terminus: Glycerol-3-phosphate acyltransferase (200 aa).

The next 5 helical transmembrane spans lie at 2–22 (FNIP…AVIV), 51–71 (KAAV…VLLA), 84–104 (AIAA…FFGF), 114–134 (LGVL…IWLV), and 159–179 (FFMP…LVLF).

Belongs to the PlsY family. Probably interacts with PlsX.

The protein localises to the cell inner membrane. The catalysed reaction is an acyl phosphate + sn-glycerol 3-phosphate = a 1-acyl-sn-glycero-3-phosphate + phosphate. The protein operates within lipid metabolism; phospholipid metabolism. Catalyzes the transfer of an acyl group from acyl-phosphate (acyl-PO(4)) to glycerol-3-phosphate (G3P) to form lysophosphatidic acid (LPA). This enzyme utilizes acyl-phosphate as fatty acyl donor, but not acyl-CoA or acyl-ACP. The chain is Glycerol-3-phosphate acyltransferase from Neisseria meningitidis serogroup C / serotype 2a (strain ATCC 700532 / DSM 15464 / FAM18).